Reading from the N-terminus, the 207-residue chain is MLRVLGLAGMLMSFNIHAAMISPVSGVKILFANGTEVDEPLEPMEVDAKSAQLVVRYAAELGSGSNQKVFDSAPFVITIDNLSEDIKLYPPKVFSYEQANREFNTSPKWRIEGVSGKEISYSQEKLKGNDGFMPYYGMEALIAKHNEERGIVFSAGVVKAEVVTTDKMVEKPATTKNADALVQLQHWYKQASTEERKAFRKWMVDQE.

A signal peptide spans 1 to 18 (MLRVLGLAGMLMSFNIHA).

It belongs to the UPF0319 family.

This Vibrio vulnificus (strain YJ016) protein is UPF0319 protein VV2327.